Here is a 798-residue protein sequence, read N- to C-terminus: Bromodomain-containing protein 2 (798 aa).

At M1 the chain carries N-acetylmethionine. Residues 1–21 form a disordered region; the sequence is MLQNVTPHKLPGEGNAGLLGL. T6 bears the Phosphothreonine mark. S36 carries the post-translational modification Phosphoserine. Residues 53–72 are disordered; it reads LQLAPANPPPPEVSNPKKPG. The Bromo 1 domain occupies 73-179; it reads RVTNQLQYLH…KIFLQKVASM (107 aa). A protein contacts are provided by D111, Y154, N155, K156, D159, and D160. Disordered stretches follow at residues 267-348, 454-645, and 736-798; these read PPAQ…LSEQ, DEPL…YDEK, and KRLQ…SDSG. The segment covering 284–297 has biased composition (low complexity); it reads TTTPTPTAILAPGS. A phosphoserine mark is found at S297, S300, and S304. A compositionally biased stretch (basic and acidic residues) spans 315-331; it reads MRRESGRPIKPPRKDLP. One can recognise a Bromo 2 domain in the interval 343–452; sequence GKLSEQLKHC…DVFEFRYAKM (110 aa). Over residues 480–512 the composition is skewed to acidic residues; sequence SSEESSSESSSEEEEEEEEDEDEEESESSDSEE. Residues 542 to 564 show a composition bias toward basic residues; it reads KPKRKREKKEKKKKRKAEKHRGR. A Nuclear localization signal motif is present at residues 553 to 557; it reads KKKRK. An NET domain is found at 630–712; it reads DSEEEEESRP…SCLRKKPRKP (83 aa). At S631 the chain carries Phosphoserine. Residues 772–792 show a composition bias toward low complexity; the sequence is SASSSSSDSSSSSSSSSSSDT.

Belongs to the BET family. Homodimer. Interacts with E2F1. Interacts with (acetylated) STAT3; promoting STAT3 recruitment to chromatin. Interacts with CTCF; promoting BRD2 recruitment to chromatin. Predominantly expressed in the testis, followed by ovary, placenta, embryo and to a lower extent in somatic tissues.

It is found in the nucleus. The protein localises to the chromosome. Its function is as follows. Chromatin reader protein that specifically recognizes and binds histone H4 acetylated at 'Lys-5' and 'Lys-12' (H4K5ac and H4K12ac, respectively), thereby controlling gene expression and remodeling chromatin structures. Recruits transcription factors and coactivators to target gene sites, and activates RNA polymerase II machinery for transcriptional elongation. Plays a key role in genome compartmentalization via its association with CTCF and cohesin: recruited to chromatin by CTCF and promotes formation of topologically associating domains (TADs) via its ability to bind acetylated histones, contributing to CTCF boundary formation and enhancer insulation. Also recognizes and binds acetylated non-histone proteins, such as STAT3. Involved in inflammatory response by regulating differentiation of naive CD4(+) T-cells into T-helper Th17: recognizes and binds STAT3 acetylated at 'Lys-87', promoting STAT3 recruitment to chromatin. In addition to acetylated lysines, also recognizes and binds lysine residues on histones that are both methylated and acetylated on the same side chain to form N6-acetyl-N6-methyllysine (Kacme), an epigenetic mark of active chromatin associated with increased transcriptional initiation. Specifically binds histone H4 acetyl-methylated at 'Lys-5' and 'Lys-12' (H4K5acme and H4K12acme, respectively). This chain is Bromodomain-containing protein 2, found in Mus musculus (Mouse).